The chain runs to 1480 residues: Cystic fibrosis transmembrane conductance regulator (1480 aa).

At Met1 to Phe77 the chain is on the cytoplasmic side. The helical transmembrane segment at Phe78 to Gln98 threads the bilayer. Residues Phe81–Leu365 form the ABC transmembrane type-1 1 domain. Residues Pro99–Tyr122 are Extracellular-facing. Residues Leu123 to His146 form a helical membrane-spanning segment. At His147 to Leu195 the chain is on the cytoplasmic side. The chain crosses the membrane as a helical span at residues Ala196–Trp216. Topologically, residues Glu217–Ser222 are extracellular. The helical transmembrane segment at Ala223–Met243 threads the bilayer. Residues Met244–Lys298 lie on the Cytoplasmic side of the membrane. A helical transmembrane segment spans residues Ala299–Phe319. At Leu320 to Thr339 the chain is on the extracellular side. Residues Ile340–Val358 traverse the membrane as a helical segment. The Cytoplasmic portion of the chain corresponds to Gln359–Ser858. ATP-binding positions include Trp401, Ser434, Gly458–Thr465, and Gln493. In terms of domain architecture, ABC transporter 1 spans Asn423–Gly646. Cys524 carries the S-palmitoyl cysteine lipid modification. Ser549 and Ser660 each carry phosphoserine. Residues Ser654–Glu831 form a disordered R region region. Residue Ser670 is modified to Phosphoserine; by PKA. Residue Ser686 is modified to Phosphoserine. Lys688 is covalently cross-linked (Glycyl lysine isopeptide (Lys-Gly) (interchain with G-Cter in ubiquitin)). 2 positions are modified to phosphoserine: Ser700 and Ser712. Thr717 is modified (phosphothreonine). 6 positions are modified to phosphoserine: Ser737, Ser753, Ser768, Ser790, Ser795, and Ser813. Residues Leu859 to Val879 form a helical membrane-spanning segment. Residues Leu859 to Ser1155 enclose the ABC transmembrane type-1 2 domain. Residues Val880–Ile918 lie on the Extracellular side of the membrane. N-linked (GlcNAc...) asparagine glycans are attached at residues Asn894, Asn900, and Asn909. The chain crosses the membrane as a discontinuously helical span at residues Tyr919–His939. The Cytoplasmic segment spans residues Thr940 to Thr990. Residues Ile991–Leu1011 traverse the membrane as a helical segment. Topologically, residues Gln1012 to Pro1013 are extracellular. A helical membrane pass occupies residues Tyr1014–Leu1034. Over Gln1035–Thr1095 the chain is Cytoplasmic. Residues Leu1096–Phe1116 form a helical membrane-spanning segment. At Ile1117–Gly1130 the chain is on the extracellular side. The helical transmembrane segment at Ile1131–Ile1151 threads the bilayer. Residues Asp1152–Leu1480 lie on the Cytoplasmic side of the membrane. Residues Met1210–His1443 enclose the ABC transporter 2 domain. Residues Tyr1219 and Gly1244–Ser1251 each bind ATP. Residues Arg1386–Leu1480 form an interaction with GORASP2 region. Cys1395 is lipidated: S-palmitoyl cysteine. Ser1444 and Ser1456 each carry phosphoserine. Residues His1452–Leu1480 are disordered. Residues Glu1470 to Leu1480 show a composition bias toward acidic residues. The short motif at Thr1478 to Leu1480 is the PDZ-binding element.

This sequence belongs to the ABC transporter superfamily. ABCC family. CFTR transporter (TC 3.A.1.202) subfamily. Monomer; does not require oligomerization for channel activity. May form oligomers in the membrane. Interacts with SLC26A3, SLC26A6 and NHERF1. Interacts with SHANK2. Interacts with MYO6. Interacts (via C-terminus) with GOPC (via PDZ domain); this promotes CFTR internalization and thereby decreases channel activity. Interacts with SLC4A7 through NHERF1. Found in a complex with MYO5B and RAB11A. Interacts with ANO1. Interacts with SLC26A8. Interacts with AHCYL1; the interaction increases CFTR activity. Interacts with CSE1L. The core-glycosylated form interacts with GORASP2 (via PDZ GRASP-type 1 domain) in respone to ER stress. Interacts with MARCHF2; the interaction leads to CFTR ubiqtuitination and degradation. Interacts with ADGRG2. Post-translationally, N-glycosylated. Phosphorylated; cAMP treatment promotes phosphorylation and activates the channel. Dephosphorylation decreases the ATPase activity (in vitro). Phosphorylation at PKA sites activates the channel. Phosphorylation at PKC sites enhances the response to phosphorylation by PKA. Phosphorylated by AMPK; this inhibits channel activity. In terms of processing, ubiquitinated, leading to its degradation in the lysosome. Deubiquitination by USP10 in early endosomes enhances its endocytic recycling to the cell membrane. Ubiquitinated by RNF185 during ER stress. Ubiquitinated by MARCHF2.

Its subcellular location is the apical cell membrane. The protein localises to the early endosome membrane. It is found in the cell membrane. It localises to the recycling endosome membrane. The protein resides in the endoplasmic reticulum membrane. Its subcellular location is the nucleus. The enzyme catalyses ATP + H2O + closed Cl(-) channel = ADP + phosphate + open Cl(-) channel.. The catalysed reaction is chloride(in) = chloride(out). It carries out the reaction hydrogencarbonate(in) = hydrogencarbonate(out). It catalyses the reaction ATP + H2O = ADP + phosphate + H(+). In terms of biological role, epithelial ion channel that plays an important role in the regulation of epithelial ion and water transport and fluid homeostasis. Mediates the transport of chloride ions across the cell membrane. Possesses an intrinsic ATPase activity and utilizes ATP to gate its channel; the passive flow of anions through the channel is gated by cycles of ATP binding and hydrolysis by the ATP-binding domains. The ion channel is also permeable to HCO(3)(-); selectivity depends on the extracellular chloride concentration. Exerts its function also by modulating the activity of other ion channels and transporters. Contributes to the regulation of the pH and the ion content of the epithelial fluid layer. Modulates the activity of the epithelial sodium channel (ENaC) complex, in part by regulating the cell surface expression of the ENaC complex. May regulate bicarbonate secretion and salvage in epithelial cells by regulating the transporter SLC4A7. Can inhibit the chloride channel activity of ANO1. Plays a role in the chloride and bicarbonate homeostasis during sperm epididymal maturation and capacitation. The protein is Cystic fibrosis transmembrane conductance regulator of Ateles geoffroyi (Black-handed spider monkey).